We begin with the raw amino-acid sequence, 385 residues long: MKVPIETSPLAWLEAVEQQRRGAGLRRSLRPRSAVATELDLASNDYLGLSQHPDVIDGGVAALRVWGAGATGSRLVTGDTILHHELECELAEFVGACVGLLFSSGYAANLGAVVGLSGPGSLIVSDAYSHASLVDACRLSRARVVVTPHCDVDAVDTALRSCHEERAVVVTESVFSADGVLAPVSELHDVCRRHGALLLVDEAHGLGVRGGGRGLVYEVGLAGAPDVVITTTMSKALGSQGGAVLGSSAVRAHLINTARPFIFDTGLAPAAVGAARAALQILKAETWRPEAVLQHARTLAKICDLSELPQSAVVSVVLGDPEVALAAAIACLDAGVRVGCFRPPTVPAGTSRLRLTAHASLDSAKLEVARRVLTDVLGGCCVARR.

A substrate-binding site is contributed by arginine 27. 105–106 (GY) contributes to the pyridoxal 5'-phosphate binding site. Histidine 130 contacts substrate. Residues serine 176, 201 to 204 (DEAH), and 232 to 235 (TMSK) each bind pyridoxal 5'-phosphate. Lysine 235 is modified (N6-(pyridoxal phosphate)lysine). Residue threonine 345 coordinates substrate.

It belongs to the class-II pyridoxal-phosphate-dependent aminotransferase family. BioF subfamily. In terms of assembly, homodimer. Pyridoxal 5'-phosphate serves as cofactor.

It carries out the reaction 6-carboxyhexanoyl-[ACP] + L-alanine + H(+) = (8S)-8-amino-7-oxononanoate + holo-[ACP] + CO2. It participates in cofactor biosynthesis; biotin biosynthesis. Its function is as follows. Catalyzes the decarboxylative condensation of pimeloyl-[acyl-carrier protein] and L-alanine to produce 8-amino-7-oxononanoate (AON), [acyl-carrier protein], and carbon dioxide. The sequence is that of 8-amino-7-oxononanoate synthase from Mycobacterium leprae (strain Br4923).